The chain runs to 218 residues: Oocyte-specific homeobox protein 7 (218 aa).

Residues 40–72 are compositionally biased toward polar residues; that stretch reads SPLVTPGSTMQSSLSVPERNLLQQESEGPSRQS. The disordered stretch occupies residues 40–77; that stretch reads SPLVTPGSTMQSSLSVPERNLLQQESEGPSRQSGCMPL. The homeobox DNA-binding region spans 94–153; that stretch reads FRKERIVYSKEQQRLLQKHFDECQYPKEKKIVELAVLIGVTKMEIKKWFKNNRAKYRQMN.

The protein belongs to the paired homeobox family. Obox subfamily. As to expression, specifically expressed in oocytes and early embryos.

The protein resides in the nucleus. Its function is as follows. Transcription factor required for zygotic genome activation (ZGA), a critical event in early embryonic development during which the developmental control passes from maternally provided mRNAs to the expression of the zygotic genome after fertilization. Together with other Obox family members, required in early two-cell stage embryos to kick-start the major ZGA wave by facilitating RNA Polymerase II 'pre-configuration', during which RNA Polymerase II relocates from the initial one-cell stage binding targets to ZGA gene promoters and distal enhancers. Mechanistically, promotes recruitment of RNA Polymerase II from (CG-rich) non-ZGA genes to (CG-poor) ZGA genes at the two-cell stage. Binds to regulatory DNA sequences containing a 5'-ACNCCTTTAATCCCAG-3' sequence motif. Most maternal and zygotic Obox family proteins can compensate for one another. The protein is Oocyte-specific homeobox protein 7 of Mus musculus (Mouse).